Reading from the N-terminus, the 367-residue chain is Trans-enoyl reductase ffsC (367 aa).

Residue 55–58 (CDWK) participates in NADP(+) binding. 143 to 150 (TGIGTLGL) contributes to the substrate binding site. Residues 203–206 (SAKN), tyrosine 221, and 268–269 (LE) contribute to the NADP(+) site. 288-292 (GMAIL) provides a ligand contact to substrate. 357–358 (VS) contributes to the NADP(+) binding site.

Belongs to the zinc-containing alcohol dehydrogenase family. As to quaternary structure, monomer.

It participates in mycotoxin biosynthesis. Functionally, trans-enoyl reductase; part of the gene cluster that mediates the biosynthesis of the cytotoxic leucine-containing cytochalasans, including aspochalasin C, aspochalasin E, TMC-169, flavichalasine F, aspergillin PZ, aspochalasin M and flavichalasine G. The first step in the pathway is catalyzed by the hybrid PKS-NRPS ffsA that utilizes 8 units of malonyl-CoA to iteratively assemble the octaketide chain before addition of L-leucine by the C-terminal NRPS modules. Because ffsA lacks a designated enoylreductase (ER) domain, the required activity is provided the enoyl reductase fssC. The methyltransferase (MT) domain of ffsA catalyzes the alpha-methylation at C10 and C14 using S-adenosyl-L-methionine as the methyl-donating cosubstrate. Reduction by the hydrolyase ffsE, followed by dehydration and intra-molecular Diels-Alder cyclization by the Diels-Alderase ffsF then yield the required isoindolone-fused macrocycle. A number of oxidative steps catalyzed by the tailoring cytochrome P450 monooxygenase ffsD, the FAD-linked oxidoreductase ffsJ and the short-chain dehydrogenase/reductase ffsI, are further required to afford the final products. The sequence is that of Trans-enoyl reductase ffsC from Aspergillus flavipes.